The sequence spans 763 residues: Putative pentatricopeptide repeat-containing protein At1g74580 (763 aa).

PPR repeat units follow at residues 39 to 69, 75 to 109, 110 to 144, 145 to 179, 180 to 214, 215 to 249, 250 to 284, 285 to 319, 320 to 354, 355 to 389, 390 to 424, 425 to 459, 460 to 494, 495 to 529, 530 to 564, 565 to 595, 601 to 635, 636 to 670, and 671 to 705; these read TLST…MREN, LEGV…DCEP, TVFS…GITP, DVYS…GCEM, NVVA…GVSL, CLST…GVLP, NLFT…GPKP, DVIT…GLEP, DSYT…GFVP, DQFT…GIKP, NVIL…GLIP, EVQT…GYFP, DIFT…GVDP, DVYT…GCAP, NLFT…SVNP, DAVT…MEEA, STPT…CLGP, DGYT…GFIP, and SLTT…GLVP.

The protein belongs to the PPR family. P subfamily.

This Arabidopsis thaliana (Mouse-ear cress) protein is Putative pentatricopeptide repeat-containing protein At1g74580.